A 304-amino-acid polypeptide reads, in one-letter code: Glutaminase (304 aa).

Positions 63, 114, 158, 165, 189, 240, and 258 each coordinate substrate.

It belongs to the glutaminase family. Homotetramer.

The catalysed reaction is L-glutamine + H2O = L-glutamate + NH4(+). The polypeptide is Glutaminase (Shewanella baltica (strain OS195)).